The primary structure comprises 293 residues: Bifunctional monothiol glutaredoxin-S16, chloroplastic (293 aa).

A chloroplast-targeting transit peptide spans 1–62; that stretch reads MAAITISSSL…APSRRRSFFI (62 aa). Cysteines 123 and 219 form a disulfide. One can recognise a Glutaredoxin domain in the interval 194–293; the sequence is EELIDRLVKE…ENGELANILN (100 aa). A glutathione-binding site is contributed by Lys211. Cys219 contacts [2Fe-2S] cluster. Residues Arg251, Phe263, and 276 to 277 each bind glutathione; that span reads CD.

Belongs to the glutaredoxin family. CGFS subfamily. As to quaternary structure, [2Fe-2S]-bridged holo-homodimer. Interacts in vitro with SUFE1, BOLA1, BOLA2 and BOLA4. Interacts in vivo only with SUFE1, BOLA1 and BOLA4. Interacts with SBP1.

It localises to the plastid. It is found in the chloroplast. Its activity is regulated as follows. The formation of an intramolecular disulfide bond negatively regulates both the N-terminal endonuclease and the C-terminal glutaredoxin activities. In terms of biological role, may only reduce GSH-thiol disulfides, but not protein disulfides. Participates probably to the maturation of iron-sulfur proteins and to the regulation of the redox state of the BOLA proteins. The GRXS16-BOLA1 heterodimer binds a labile, oxygen sensitive iron-sulfur cluster. Able to cleave linearized DNA in vitro. The protein is Bifunctional monothiol glutaredoxin-S16, chloroplastic of Arabidopsis thaliana (Mouse-ear cress).